The sequence spans 151 residues: uncharacterized protein (151 aa).

BON domains follow at residues D2–K68 and I78–H146.

This is an uncharacterized protein from Anaplasma centrale.